The chain runs to 309 residues: Ribosomal RNA small subunit methyltransferase H (309 aa).

Residues 36-38 (GGH), D56, F82, D103, and Q110 contribute to the S-adenosyl-L-methionine site.

It belongs to the methyltransferase superfamily. RsmH family.

It is found in the cytoplasm. The catalysed reaction is cytidine(1402) in 16S rRNA + S-adenosyl-L-methionine = N(4)-methylcytidine(1402) in 16S rRNA + S-adenosyl-L-homocysteine + H(+). Specifically methylates the N4 position of cytidine in position 1402 (C1402) of 16S rRNA. The polypeptide is Ribosomal RNA small subunit methyltransferase H (Hahella chejuensis (strain KCTC 2396)).